A 366-amino-acid chain; its full sequence is 4-hydroxy-3-methylbut-2-en-1-yl diphosphate synthase (flavodoxin) (366 aa).

Residues Cys270, Cys273, Cys305, and Glu312 each contribute to the [4Fe-4S] cluster site.

The protein belongs to the IspG family. [4Fe-4S] cluster is required as a cofactor.

The enzyme catalyses (2E)-4-hydroxy-3-methylbut-2-enyl diphosphate + oxidized [flavodoxin] + H2O + 2 H(+) = 2-C-methyl-D-erythritol 2,4-cyclic diphosphate + reduced [flavodoxin]. Its pathway is isoprenoid biosynthesis; isopentenyl diphosphate biosynthesis via DXP pathway; isopentenyl diphosphate from 1-deoxy-D-xylulose 5-phosphate: step 5/6. Functionally, converts 2C-methyl-D-erythritol 2,4-cyclodiphosphate (ME-2,4cPP) into 1-hydroxy-2-methyl-2-(E)-butenyl 4-diphosphate. This chain is 4-hydroxy-3-methylbut-2-en-1-yl diphosphate synthase (flavodoxin), found in Wigglesworthia glossinidia brevipalpis.